Consider the following 257-residue polypeptide: UPF0246 protein Sbal195_1149 (257 aa).

The protein belongs to the UPF0246 family.

The protein is UPF0246 protein Sbal195_1149 of Shewanella baltica (strain OS195).